The primary structure comprises 780 residues: Ral guanine nucleotide dissociation stimulator-like 2 (780 aa).

A disordered region spans residues 1-92; it reads MLPRPLRLLW…PTPPPRSSRR (92 aa). Ser13 is subject to Phosphoserine. The segment covering 31-42 has biased composition (gly residues); the sequence is GGGPGGRGVGGG. Positions 43-65 are enriched in acidic residues; sequence QEEEEEEEEDEAPVSVWDEEEDG. The region spanning 89–213 is the N-terminal Ras-GEF domain; that stretch reads SSRRLRAGTL…GSADLIRNLR (125 aa). The Ras-GEF domain occupies 244 to 516; the sequence is LADHLAEQLT…HRVSCEVEPP (273 aa). A compositionally biased stretch (low complexity) spans 596–613; sequence HSLADPSHLSPPASSPRP. 2 disordered regions span residues 596-651 and 741-769; these read HSLA…GASD and TATL…PRIK. Residues 651 to 738 enclose the Ras-associating domain; that stretch reads DCRIIRVQME…HDFLLRQRRR (88 aa). Residues 741 to 758 are compositionally biased toward low complexity; sequence TATLGLTSSPSASGTPPS.

In terms of assembly, interacts with SAMD9.

Functionally, probable guanine nucleotide exchange factor. Putative effector of Ras and/or Rap. Associates with the GTP-bound form of Rap 1A and H-Ras in vitro. This Canis lupus familiaris (Dog) protein is Ral guanine nucleotide dissociation stimulator-like 2 (RGL2).